The chain runs to 259 residues: L-arginine-binding protein (259 aa).

A signal peptide spans 1 to 21 (MKKLALLGALALSVLSLPTFA).

The protein belongs to the bacterial solute-binding protein 3 family.

The protein localises to the periplasm. Binds L-arginine with high affinity. Shows no measurable affinity for L-ornithine. This Pseudomonas aeruginosa (strain ATCC 15692 / DSM 22644 / CIP 104116 / JCM 14847 / LMG 12228 / 1C / PRS 101 / PAO1) protein is L-arginine-binding protein.